Consider the following 540-residue polypeptide: Methionine--tRNA ligase 1 (540 aa).

A 'HIGH' region motif is present at residues 10–20 (PYANGSLHLGH). Positions 141, 144, 153, and 156 each coordinate Zn(2+). Positions 327 to 331 (KISTS) match the 'KMSKS' region motif. ATP is bound at residue T330.

This sequence belongs to the class-I aminoacyl-tRNA synthetase family. MetG type 1 subfamily. Monomer. Requires Zn(2+) as cofactor.

It is found in the cytoplasm. The catalysed reaction is tRNA(Met) + L-methionine + ATP = L-methionyl-tRNA(Met) + AMP + diphosphate. Is required not only for elongation of protein synthesis but also for the initiation of all mRNA translation through initiator tRNA(fMet) aminoacylation. In Alkaliphilus oremlandii (strain OhILAs) (Clostridium oremlandii (strain OhILAs)), this protein is Methionine--tRNA ligase 1.